The chain runs to 380 residues: Protein Wnt-5a (380 aa).

The first 35 residues, 1–35 (MKKSIGILSPGVALGMAGSAMSSKFFLVALAIFFS), serve as a signal peptide directing secretion. The propeptide occupies 36 to 61 (FAQVVIEANSWWSLGMNNPVQMSEVY). Residues C104 and C115 are joined by a disulfide bond. N114 and N120 each carry an N-linked (GlcNAc...) asparagine glycan. Disulfide bonds link C154–C162, C164–C182, C238–C252, C240–C247, C309–C340, C325–C335, C339–C379, C355–C370, C357–C367, and C362–C363. S244 carries O-palmitoleoyl serine; by PORCN lipidation. 2 N-linked (GlcNAc...) asparagine glycosylation sites follow: N312 and N326.

This sequence belongs to the Wnt family. In terms of assembly, forms a soluble 1:1 complex with AFM; this prevents oligomerization and is required for prolonged biological activity. The complex with AFM may represent the physiological form in body fluids. Homooligomer; disulfide-linked, leading to inactivation (in vitro). Interacts with PORCN. Interacts with WLS. Interacts with glypican GCP3. Interacts with PKD1 (via extracellular domain). Interacts with TMEM67. Glycosylation is necessary for secretion but not for activity. In terms of processing, palmitoleoylation is required for efficient binding to frizzled receptors. Depalmitoleoylation leads to Wnt signaling pathway inhibition. Post-translationally, proteolytic processing by TIKI1 and TIKI2 promotes oxidation and formation of large disulfide-bond oligomers, leading to inactivation of WNT5A. As to expression, expression is increased in differentiated thyroid carcinomas compared to normal thyroid tissue and anaplastic thyroid tumors where expression is low or undetectable. Expression is found in thyrocytes but not in stromal cells (at protein level). Detected in neonate heart and lung.

It localises to the secreted. Its subcellular location is the extracellular space. It is found in the extracellular matrix. Its function is as follows. Ligand for members of the frizzled family of seven transmembrane receptors. Can activate or inhibit canonical Wnt signaling, depending on receptor context. In the presence of FZD4, activates beta-catenin signaling. In the presence of ROR2, inhibits the canonical Wnt pathway by promoting beta-catenin degradation through a GSK3-independent pathway which involves down-regulation of beta-catenin-induced reporter gene expression. Suppression of the canonical pathway allows chondrogenesis to occur and inhibits tumor formation. Stimulates cell migration. Decreases proliferation, migration, invasiveness and clonogenicity of carcinoma cells and may act as a tumor suppressor. Mediates motility of melanoma cells. Required during embryogenesis for extension of the primary anterior-posterior axis and for outgrowth of limbs and the genital tubercle. Inhibits type II collagen expression in chondrocytes. This Homo sapiens (Human) protein is Protein Wnt-5a (WNT5A).